The primary structure comprises 394 residues: METPVGLRFCPTDEEIVVDYLWPKNSDRDTSHVDRFINTVPVCRLDPWELPCQSRIKLKDVAWCFFRPKENKYGRGDQQMRKTKSGFWKSTGRPKPIMRNRQQIGEKKILMFYTSKESKSDWVIHEYHGFSHNQMMMTYTLCKVMFNGGMREKSSSSPSSSGVSGIEQSRRDSLIPQLVNNSEGSSLHREDPSQFGDVLQEAPIEDAKLTEELVKWLMNDEDDAQIEDAIPIEEWETWLNDIDDAKEKSIMFMHDNRSDYRPPNSLTGVFSDDVSSDDNDSDLLTPKTNSIQTSSTCDSFGSSNHRIDQIKDLQESPTSTINLVSLTQEVSQALITSIDTAEKKKNPYDDAQGTEIGEHKLGQETIKKKRAGFFHRMIQKFVKKIHLCSSISRT.

Residues 3-147 (TPVGLRFCPT…TYTLCKVMFN (145 aa)) form the NAC domain. Residues 104–153 (IGEKKILMFYTSKESKSDWVIHEYHGFSHNQMMMTYTLCKVMFNGGMREK) mediate DNA binding. 2 disordered regions span residues 152-173 (EKSS…RRDS) and 264-300 (NSLT…CDSF). The span at 155-165 (SSSPSSSGVSG) shows a compositional bias: low complexity. Over residues 286–300 (PKTNSIQTSSTCDSF) the composition is skewed to polar residues.

Its subcellular location is the nucleus. In Arabidopsis thaliana (Mouse-ear cress), this protein is NAC domain-containing protein 3 (NAC003).